A 107-amino-acid polypeptide reads, in one-letter code: Nucleoid-associated protein Atu0095 (107 aa).

Positions 81–107 are disordered; sequence KGEAQAQEKMADLTAGLPLPPGMKLPF. The span at 98–107 shows a compositional bias: pro residues; the sequence is PLPPGMKLPF.

It belongs to the YbaB/EbfC family. As to quaternary structure, homodimer.

It is found in the cytoplasm. The protein localises to the nucleoid. Its function is as follows. Binds to DNA and alters its conformation. May be involved in regulation of gene expression, nucleoid organization and DNA protection. This Agrobacterium fabrum (strain C58 / ATCC 33970) (Agrobacterium tumefaciens (strain C58)) protein is Nucleoid-associated protein Atu0095.